The primary structure comprises 333 residues: Ornithine carbamoyltransferase (333 aa).

Carbamoyl phosphate is bound by residues 57–60 (STRT), Gln83, Arg107, and 134–137 (HPTQ). L-ornithine is bound by residues Asn168, Asp232, and 236 to 237 (SM). Residues 274–275 (CL) and Arg319 each bind carbamoyl phosphate.

Belongs to the aspartate/ornithine carbamoyltransferase superfamily. OTCase family.

The protein localises to the cytoplasm. It catalyses the reaction carbamoyl phosphate + L-ornithine = L-citrulline + phosphate + H(+). It functions in the pathway amino-acid biosynthesis; L-arginine biosynthesis; L-arginine from L-ornithine and carbamoyl phosphate: step 1/3. Reversibly catalyzes the transfer of the carbamoyl group from carbamoyl phosphate (CP) to the N(epsilon) atom of ornithine (ORN) to produce L-citrulline. In Photobacterium profundum (strain SS9), this protein is Ornithine carbamoyltransferase.